Consider the following 385-residue polypeptide: Urotensin-2 receptor (385 aa).

The Extracellular segment spans residues 1-53 (MALSLESTSFPMLAVSRSTASELPGGFNVSHNSSWTGPTDPSSLQDLVATGVI). Residues asparagine 28 and asparagine 32 are each glycosylated (N-linked (GlcNAc...) asparagine). A helical membrane pass occupies residues 54 to 76 (GAVLSTMGVVGVVGNVYTLVVMC). The Cytoplasmic portion of the chain corresponds to 77 to 86 (RFLRASASMY). The chain crosses the membrane as a helical span at residues 87-112 (VYVVNLALADLLYLLSIPFIVATYVT). At 113-123 (KDWHFGDVGCR) the chain is on the extracellular side. Residues cysteine 122 and cysteine 198 are joined by a disulfide bond. Residues 124-145 (VLFSLDFLTMHASIFTLTIMSS) traverse the membrane as a helical segment. Residues 146–166 (ERYAAVLRPLDTVQRSKGYRK) lie on the Cytoplasmic side of the membrane. A helical membrane pass occupies residues 167-185 (LLALGTWLLALLLTLPMML). Residues 186-208 (AIRLVRRGSKSLCLPAWGPRAHR) are Extracellular-facing. A helical transmembrane segment spans residues 209–231 (TYLTLLFGTSIVGPGLVIGLLYI). Residues 232–257 (RLARAYWLSQQASFKQTRRLPNPRVL) are Cytoplasmic-facing. The chain crosses the membrane as a helical span at residues 258–283 (YLILGIVLLFWACFLPFWLWQLLAQY). The Extracellular portion of the chain corresponds to 284-298 (HQAMPLTPETARIIN). Residues 299–320 (YLTACLTYGNSCINPFLYTLLT) form a helical membrane-spanning segment. Topologically, residues 321–385 (KNYREYLRGR…SPVPPNGAFV (65 aa)) are cytoplasmic.

It belongs to the G-protein coupled receptor 1 family.

The protein resides in the cell membrane. Its function is as follows. High affinity receptor for urotensin-2 and urotensin-2B. The activity of this receptor is mediated by a G-protein that activate a phosphatidylinositol-calcium second messenger system. This is Urotensin-2 receptor (Uts2r) from Mus musculus (Mouse).